We begin with the raw amino-acid sequence, 435 residues long: GTPase Obg (435 aa).

The 158-residue stretch at 1–158 folds into the Obg domain; the sequence is MFIDRAKIYV…RWLYLELKLL (158 aa). The OBG-type G domain maps to 159–328; sequence ADVGLVGLPN…LLELMEKYVR (170 aa). GTP is bound by residues 165–172, 190–194, 211–214, 280–283, and 309–311; these read GLPNAGKS, FTTKT, DIPG, NKID, and SAK. 2 residues coordinate Mg(2+): Ser-172 and Thr-192. The OCT domain maps to 343–426; that stretch reads IQETKEGRVE…IGDYIFKYNA (84 aa).

The protein belongs to the TRAFAC class OBG-HflX-like GTPase superfamily. OBG GTPase family. In terms of assembly, monomer. Requires Mg(2+) as cofactor.

The protein localises to the cytoplasm. An essential GTPase which binds GTP, GDP and possibly (p)ppGpp with moderate affinity, with high nucleotide exchange rates and a fairly low GTP hydrolysis rate. Plays a role in control of the cell cycle, stress response, ribosome biogenesis and in those bacteria that undergo differentiation, in morphogenesis control. This chain is GTPase Obg, found in Dictyoglomus thermophilum (strain ATCC 35947 / DSM 3960 / H-6-12).